The chain runs to 333 residues: DNA-directed RNA polymerase subunit alpha (333 aa).

The alpha N-terminal domain (alpha-NTD) stretch occupies residues M1 to K234. The alpha C-terminal domain (alpha-CTD) stretch occupies residues I248–A333.

Belongs to the RNA polymerase alpha chain family. In terms of assembly, homodimer. The RNAP catalytic core consists of 2 alpha, 1 beta, 1 beta' and 1 omega subunit. When a sigma factor is associated with the core the holoenzyme is formed, which can initiate transcription.

It catalyses the reaction RNA(n) + a ribonucleoside 5'-triphosphate = RNA(n+1) + diphosphate. DNA-dependent RNA polymerase catalyzes the transcription of DNA into RNA using the four ribonucleoside triphosphates as substrates. This chain is DNA-directed RNA polymerase subunit alpha, found in Stutzerimonas stutzeri (strain A1501) (Pseudomonas stutzeri).